The following is a 313-amino-acid chain: Ribosomal RNA small subunit methyltransferase H (313 aa).

S-adenosyl-L-methionine-binding positions include 33–35, Asp53, Phe82, Asp103, and Gln110; that span reads AGH.

Belongs to the methyltransferase superfamily. RsmH family.

It localises to the cytoplasm. The enzyme catalyses cytidine(1402) in 16S rRNA + S-adenosyl-L-methionine = N(4)-methylcytidine(1402) in 16S rRNA + S-adenosyl-L-homocysteine + H(+). Specifically methylates the N4 position of cytidine in position 1402 (C1402) of 16S rRNA. This is Ribosomal RNA small subunit methyltransferase H from Acetivibrio thermocellus (strain ATCC 27405 / DSM 1237 / JCM 9322 / NBRC 103400 / NCIMB 10682 / NRRL B-4536 / VPI 7372) (Clostridium thermocellum).